Reading from the N-terminus, the 689-residue chain is DNA ligase (689 aa).

NAD(+)-binding positions include 40 to 44, 89 to 90, and E121; these read DSEYD and SL. K123 (N6-AMP-lysine intermediate) is an active-site residue. 4 residues coordinate NAD(+): R144, E179, K295, and K319. Residues C413, C416, C431, and C437 each coordinate Zn(2+). The 80-residue stretch at 610–689 folds into the BRCT domain; sequence REQSSLTDKI…EEWLTLIKNV (80 aa).

This sequence belongs to the NAD-dependent DNA ligase family. LigA subfamily. Requires Mg(2+) as cofactor. Mn(2+) serves as cofactor.

It catalyses the reaction NAD(+) + (deoxyribonucleotide)n-3'-hydroxyl + 5'-phospho-(deoxyribonucleotide)m = (deoxyribonucleotide)n+m + AMP + beta-nicotinamide D-nucleotide.. In terms of biological role, DNA ligase that catalyzes the formation of phosphodiester linkages between 5'-phosphoryl and 3'-hydroxyl groups in double-stranded DNA using NAD as a coenzyme and as the energy source for the reaction. It is essential for DNA replication and repair of damaged DNA. This Rickettsia rickettsii (strain Iowa) protein is DNA ligase.